The sequence spans 387 residues: MSHRKYEAPRHGHLGFLPRKRAASVRGRVKSFPKDDQTKPVALTSFLGYKAGMSTIVRDLDRPGSKFHKREVVEAVTVVDTPPIVVVGVVGYVETPRGLRSLTTVWAEHLSDEVKRRFYKNWYKSKKKAFTKYSAKYAENGAQVDRELARIKKYASVVRVLVHTQVRKTPLSQKKAHLAEIQLNGGSVSDKVDWAKEHFEKTVAVDSVFEQNEMIDVVAVTKGHGFEGVTHRWGTKKLPRKTHRGLRKVACIGAWHPAHVMWSVARAGQRGYHHRTSINHKVYRVGKGDDEANAATEFDRTKKTITPMGGFVHYGAINNDFVILKGSIPGTRKRVVTLRKSLYTNTSRKALEEVTLKWIDTASKFGKGRFQTPAEKHAFLGTLKKDL.

The protein belongs to the universal ribosomal protein uL3 family.

It is found in the cytoplasm. This is Large ribosomal subunit protein uL3 (RPL3) from Kluyveromyces lactis (strain ATCC 8585 / CBS 2359 / DSM 70799 / NBRC 1267 / NRRL Y-1140 / WM37) (Yeast).